The following is a 499-amino-acid chain: MPHPRRYHSSERGSRGSYREHYRSRKHKRRRSRSWSSSSDRTRRRRREDSYHVRSRSSYDDRSSDRRVYDRRYCGSYRRNDYSRDRGDAYYDTDYRHSYEYQRENSSYRSQRSSRRKHRRRRRRSRTFSRSSSQHSSRRAKSVEDDAEGHLIYHVGDWLQERYEIVSTLGEGTFGRVVQCVDHRRGGARVALKIIKNVEKYKEAARLEINVLEKINEKDPDNKNLCVQMFDWFDYHGHMCISFELLGLSTFDFLKDNNYLPYPIHQVRHMAFQLCQAVKFLHDNKLTHTDLKPENILFVNSDYELTYNLEKKRDERSVKSTAVRVVDFGSATFDHEHHSTIVSTRHYRAPEVILELGWSQPCDVWSIGCIIFEYYVGFTLFQTHDNREHLAMMERILGPIPSRMIRKTRKQKYFYRGRLDWDENTSAGRYVRENCKPLRRYLTSEAEEHHQLFDLIESMLEYEPAKRLTLGEALQHPFFARLRAEPPNKLWDSSRDISR.

Residues 1-67 (MPHPRRYHSS…SYDDRSSDRR (67 aa)) form a disordered region. Residues 8-21 (HSSERGSRGSYREH) show a composition bias toward basic and acidic residues. A compositionally biased stretch (basic residues) spans 22 to 33 (YRSRKHKRRRSR). A Phosphoserine; by PKB/AKT1 modification is found at Ser34. Residues 47–67 (REDSYHVRSRSSYDDRSSDRR) are compositionally biased toward basic and acidic residues. Phosphoserine is present on Ser98. Phosphotyrosine; by autocatalysis is present on Tyr99. A disordered region spans residues 101 to 143 (YQRENSSYRSQRSSRRKHRRRRRRSRTFSRSSSQHSSRRAKSV). A compositionally biased stretch (basic residues) spans 112 to 127 (RSSRRKHRRRRRRSRT). The residue at position 127 (Thr127) is a Phosphothreonine; by PKB/AKT1. Ser142 is subject to Phosphoserine; by autocatalysis. Residue Tyr153 is modified to Phosphotyrosine. The region spanning 163-479 (YEIVSTLGEG…LGEALQHPFF (317 aa)) is the Protein kinase domain. Residues 169–177 (LGEGTFGRV) and Lys193 each bind ATP. Asp290 (proton acceptor) is an active-site residue. The residue at position 344 (Thr344) is a Phosphothreonine; by PKB/AKT2.

It belongs to the protein kinase superfamily. CMGC Ser/Thr protein kinase family. Lammer subfamily. Interacts with RBMX. Interacts with AKT1 and UBL5. Post-translationally, autophosphorylates on all three types of residues. Phosphorylation on Ser-34 and Thr-127 by AKT1 is induced by ionizing radiation or insulin. Phosphorylation plays a critical role in cell proliferation following low dose radiation and prevents cell death following high dose radiation. Phosphorylation at Thr-344 by PKB/AKT2 induces its kinase activity which is required for its stability. The phosphorylation status at Ser-142 influences its subnuclear localization; inhibition of phosphorylation at Ser-142 results in accumulation in the nuclear speckle. In terms of tissue distribution, endothelial cells. Expressed in androgen-dependent prostate cancer cells.

It localises to the nucleus. The protein localises to the nucleus speckle. The enzyme catalyses L-seryl-[protein] + ATP = O-phospho-L-seryl-[protein] + ADP + H(+). It catalyses the reaction L-threonyl-[protein] + ATP = O-phospho-L-threonyl-[protein] + ADP + H(+). It carries out the reaction L-tyrosyl-[protein] + ATP = O-phospho-L-tyrosyl-[protein] + ADP + H(+). Its activity is regulated as follows. 5,6-dichloro-1-b-D-ribofuranosylbenzimidazole (DRB) inhibits autophosphorylation. TG003 inhibits its kinase activity and affects the regulation of alternative splicing mediated by phosphorylation of SR proteins. In terms of biological role, dual specificity kinase acting on both serine/threonine and tyrosine-containing substrates. Phosphorylates serine- and arginine-rich (SR) proteins of the spliceosomal complex. May be a constituent of a network of regulatory mechanisms that enable SR proteins to control RNA splicing and can cause redistribution of SR proteins from speckles to a diffuse nucleoplasmic distribution. Acts as a suppressor of hepatic gluconeogenesis and glucose output by repressing PPARGC1A transcriptional activity on gluconeogenic genes via its phosphorylation. Phosphorylates PPP2R5B thereby stimulating the assembly of PP2A phosphatase with the PPP2R5B-AKT1 complex leading to dephosphorylation of AKT1. Phosphorylates: PTPN1, SRSF1 and SRSF3. Regulates the alternative splicing of tissue factor (F3) pre-mRNA in endothelial cells. Phosphorylates PAGE4 at several serine and threonine residues and this phosphorylation attenuates the ability of PAGE4 to potentiate the transcriptional activator activity of JUN. The sequence is that of Dual specificity protein kinase CLK2 (CLK2) from Homo sapiens (Human).